The following is a 335-amino-acid chain: DNA-directed RNA polymerase subunit alpha (335 aa).

The segment at 1–233 (MMLNATEFLT…QQISIFVDLE (233 aa)) is alpha N-terminal domain (alpha-NTD). The alpha C-terminal domain (alpha-CTD) stretch occupies residues 247–335 (VDPVLLRPVD…VDDRFSYRSR (89 aa)).

It belongs to the RNA polymerase alpha chain family. As to quaternary structure, homodimer. The RNAP catalytic core consists of 2 alpha, 1 beta, 1 beta' and 1 omega subunit. When a sigma factor is associated with the core the holoenzyme is formed, which can initiate transcription.

The catalysed reaction is RNA(n) + a ribonucleoside 5'-triphosphate = RNA(n+1) + diphosphate. DNA-dependent RNA polymerase catalyzes the transcription of DNA into RNA using the four ribonucleoside triphosphates as substrates. The polypeptide is DNA-directed RNA polymerase subunit alpha (Psychrobacter sp. (strain PRwf-1)).